Consider the following 306-residue polypeptide: 3-methyl-2-oxobutanoate hydroxymethyltransferase (306 aa).

Residues aspartate 53 and aspartate 96 each coordinate Mg(2+). Residues 53–54 (DS), aspartate 96, and lysine 126 contribute to the 3-methyl-2-oxobutanoate site. Residue glutamate 128 participates in Mg(2+) binding. Glutamate 195 (proton acceptor) is an active-site residue.

This sequence belongs to the PanB family. In terms of assembly, homodecamer; pentamer of dimers. Mg(2+) is required as a cofactor.

Its subcellular location is the cytoplasm. The enzyme catalyses 3-methyl-2-oxobutanoate + (6R)-5,10-methylene-5,6,7,8-tetrahydrofolate + H2O = 2-dehydropantoate + (6S)-5,6,7,8-tetrahydrofolate. The protein operates within cofactor biosynthesis; (R)-pantothenate biosynthesis; (R)-pantoate from 3-methyl-2-oxobutanoate: step 1/2. Catalyzes the reversible reaction in which hydroxymethyl group from 5,10-methylenetetrahydrofolate is transferred onto alpha-ketoisovalerate to form ketopantoate. The chain is 3-methyl-2-oxobutanoate hydroxymethyltransferase from Anaeromyxobacter dehalogenans (strain 2CP-1 / ATCC BAA-258).